The sequence spans 431 residues: Trigger factor (431 aa).

The PPIase FKBP-type domain maps to 165-250; sequence GDTVVIDFDG…IHELKRKELP (86 aa).

The protein belongs to the FKBP-type PPIase family. Tig subfamily.

Its subcellular location is the cytoplasm. The enzyme catalyses [protein]-peptidylproline (omega=180) = [protein]-peptidylproline (omega=0). In terms of biological role, involved in protein export. Acts as a chaperone by maintaining the newly synthesized protein in an open conformation. Functions as a peptidyl-prolyl cis-trans isomerase. This is Trigger factor from Leuconostoc mesenteroides subsp. mesenteroides (strain ATCC 8293 / DSM 20343 / BCRC 11652 / CCM 1803 / JCM 6124 / NCDO 523 / NBRC 100496 / NCIMB 8023 / NCTC 12954 / NRRL B-1118 / 37Y).